The primary structure comprises 335 residues: UPF0065 protein BB4329 (335 aa).

The first 39 residues, 1–39, serve as a signal peptide directing secretion; it reads MNKNIPAFHRRCHGLVQGLARTLLLAPVLLALSVPAAQA.

The protein belongs to the UPF0065 (bug) family.

The protein resides in the periplasm. The chain is UPF0065 protein BB4329 from Bordetella bronchiseptica (strain ATCC BAA-588 / NCTC 13252 / RB50) (Alcaligenes bronchisepticus).